The sequence spans 224 residues: Glutathione S-transferase U1 (224 aa).

The GST N-terminal domain maps to 6-85 (ESVKLLGFWA…YIDQTWKNSP (80 aa)). Residues 16-17 (SP), 42-43 (NK), 56-57 (KV), and 69-70 (ES) each bind glutathione. Positions 90–217 (DPYEKAMARF…EKQIERMTKI (128 aa)) constitute a GST C-terminal domain. A Phosphothreonine modification is found at threonine 151.

The protein belongs to the GST superfamily. Tau family.

The protein resides in the cytoplasm. It is found in the cytosol. The enzyme catalyses RX + glutathione = an S-substituted glutathione + a halide anion + H(+). Its function is as follows. May be involved in the conjugation of reduced glutathione to a wide number of exogenous and endogenous hydrophobic electrophiles and have a detoxification role against certain herbicides. The sequence is that of Glutathione S-transferase U1 (GSTU1) from Arabidopsis thaliana (Mouse-ear cress).